We begin with the raw amino-acid sequence, 158 residues long: MQGRLSAWLVKHELVHRSLGFDYQGIETLQIKPEDWYSIAVISYVYGYNYLRSQCAYDIAPGGLLASVYHLTRIQYGVDQPEEVCIKVFAPRRNPRIPSVFWIWKSADFQERESYDMLGISYDNHPRLKRILMPESWIGWPLRKDYIAPNFYEIQDAH.

It belongs to the complex I 30 kDa subunit family. As to quaternary structure, NDH is composed of at least 16 different subunits, 5 of which are encoded in the nucleus.

The protein localises to the plastid. It is found in the chloroplast thylakoid membrane. It catalyses the reaction a plastoquinone + NADH + (n+1) H(+)(in) = a plastoquinol + NAD(+) + n H(+)(out). The catalysed reaction is a plastoquinone + NADPH + (n+1) H(+)(in) = a plastoquinol + NADP(+) + n H(+)(out). In terms of biological role, NDH shuttles electrons from NAD(P)H:plastoquinone, via FMN and iron-sulfur (Fe-S) centers, to quinones in the photosynthetic chain and possibly in a chloroplast respiratory chain. The immediate electron acceptor for the enzyme in this species is believed to be plastoquinone. Couples the redox reaction to proton translocation, and thus conserves the redox energy in a proton gradient. The sequence is that of NAD(P)H-quinone oxidoreductase subunit J, chloroplastic from Chloranthus spicatus (Chulantree).